Reading from the N-terminus, the 408-residue chain is MKQESSFLAKLANGSLVLQILVGIIAGVSLASFSHEAAKQVAFLGSLFVGALKAIAPILVFILVASSIANQKKNTQTNMRPIVVLYLFGTFAAALTAVLLSMMFPTNLVLVAGVEGTSPPQGIGEVINTLLFKLVDNPVNALMTGNYIGILAWGVGLGLALHHASDSTKQVFADVSHGISQMVRFIIRLAPIGIFGLVAATFAETGFAAIAGYAKLLAVLLGAMAIIALIVNPLIVYVKIKRNPYPLVIRCLRESGVTAFFTRSSAANIPVNMALCEKLKLHEDTYSVSIPLGATINMGGAAITITVLTLAAAHTLGIQVDLLTALLLSVVAAVSACGASGVAGGSLLLIPLACSLFGISNDVAMQVVAVGFIIGVIQDAAETALNSSTDVIFTAAACEAAENKAKLG.

The next 9 helical transmembrane spans lie at Leu11–Ala31, Phe43–Leu63, Ile82–Met102, Ala141–Leu161, Ile192–Gly212, Leu216–Val236, Met298–Ile318, Ala339–Ile359, and Val363–Thr383.

This sequence belongs to the dicarboxylate/amino acid:cation symporter (DAACS) (TC 2.A.23) family.

The protein localises to the cell inner membrane. The enzyme catalyses L-serine(in) + Na(+)(in) = L-serine(out) + Na(+)(out). It carries out the reaction L-threonine(in) + Na(+)(in) = L-threonine(out) + Na(+)(out). Involved in the import of serine and threonine into the cell, with the concomitant import of sodium (symport system). In Shewanella sp. (strain MR-7), this protein is Serine/threonine transporter SstT.